We begin with the raw amino-acid sequence, 362 residues long: Class I histocompatibility antigen, Gogo-B*0103 alpha chain (362 aa).

The N-terminal stretch at methionine 1–alanine 24 is a signal peptide. The segment at glycine 25 to alanine 114 is alpha-1. The Extracellular portion of the chain corresponds to glycine 25–isoleucine 308. Asparagine 110 carries an N-linked (GlcNAc...) asparagine glycan. Residues glycine 115–alanine 206 are alpha-2. 2 disulfide bridges follow: cysteine 125-cysteine 188 and cysteine 227-cysteine 283. The interval aspartate 207 to tryptophan 298 is alpha-3. Residues proline 209 to threonine 295 form the Ig-like C1-type domain. The connecting peptide stretch occupies residues glutamate 299–isoleucine 308. A helical membrane pass occupies residues valine 309 to cysteine 332. The Cytoplasmic portion of the chain corresponds to arginine 333–alanine 362. The interval lysine 335–alanine 362 is disordered. Positions serine 343–alanine 362 are enriched in low complexity.

It belongs to the MHC class I family. Heterodimer of an alpha chain and a beta chain (beta-2-microglobulin).

Its subcellular location is the membrane. In terms of biological role, involved in the presentation of foreign antigens to the immune system. The polypeptide is Class I histocompatibility antigen, Gogo-B*0103 alpha chain (Gorilla gorilla gorilla (Western lowland gorilla)).